Reading from the N-terminus, the 65-residue chain is Antitoxin VapB32 (65 aa).

Residues 46–65 (ALGGTDPQATAAPRRRTSPR) are disordered.

Its function is as follows. Antitoxin component of a type II toxin-antitoxin (TA) system. The sequence is that of Antitoxin VapB32 (vapB32) from Mycobacterium tuberculosis (strain CDC 1551 / Oshkosh).